Reading from the N-terminus, the 211-residue chain is ATP phosphoribosyltransferase (211 aa).

It belongs to the ATP phosphoribosyltransferase family. Short subfamily. Heteromultimer composed of HisG and HisZ subunits.

The protein resides in the cytoplasm. It catalyses the reaction 1-(5-phospho-beta-D-ribosyl)-ATP + diphosphate = 5-phospho-alpha-D-ribose 1-diphosphate + ATP. It functions in the pathway amino-acid biosynthesis; L-histidine biosynthesis; L-histidine from 5-phospho-alpha-D-ribose 1-diphosphate: step 1/9. Catalyzes the condensation of ATP and 5-phosphoribose 1-diphosphate to form N'-(5'-phosphoribosyl)-ATP (PR-ATP). Has a crucial role in the pathway because the rate of histidine biosynthesis seems to be controlled primarily by regulation of HisG enzymatic activity. The sequence is that of ATP phosphoribosyltransferase from Thermosynechococcus vestitus (strain NIES-2133 / IAM M-273 / BP-1).